A 562-amino-acid polypeptide reads, in one-letter code: Protein wntless (562 aa).

Topologically, residues 1 to 13 are cytoplasmic; sequence MSGTILENLSGRK. A helical membrane pass occupies residues 14–34; it reads LSILVTTLLLCQVLCFLLGGL. The Lumenal portion of the chain corresponds to 35 to 239; sequence YAPLPAGHVT…AIHQNGGFTQ (205 aa). Asn-58 carries N-linked (GlcNAc...) asparagine glycosylation. A helical transmembrane segment spans residues 240 to 260; the sequence is IWLLLKTVLFPFVVGIMIWFW. Residues 261–270 lie on the Cytoplasmic side of the membrane; that stretch reads RRVHLLQRSP. The helical transmembrane segment at 271 to 291 threads the bilayer; sequence ALLEYMLIYLGAALTFLNLPL. The Lumenal segment spans residues 292 to 311; that stretch reads EYLSLVFEMPYMLLLSDIRQ. The chain crosses the membrane as a helical span at residues 312–332; that stretch reads GIFYAMLLTFWLVFAGEHMLI. The Cytoplasmic portion of the chain corresponds to 333 to 344; it reads QDAPNKSTIRSR. The helical transmembrane segment at 345–365 threads the bilayer; the sequence is YWKHLSAVVVGCISLFVFDIC. Residues 366–390 lie on the Lumenal side of the membrane; it reads ERGVQLRNPFYSIWAMPLAAKMAMT. Residues 391–411 form a helical membrane-spanning segment; that stretch reads FIVLAGVSAAIYFLFLCYMIW. Over 412–441 the chain is Cytoplasmic; the sequence is KVFRNIGDKRTSLPSMSQARRLHYESLIYR. Residues 442–462 form a helical membrane-spanning segment; the sequence is FKFLMLATIVCAALTVTGFIM. Topologically, residues 463-482 are lumenal; that stretch reads GQRAEGQWDWNDNVAIQPTS. A helical transmembrane segment spans residues 483-503; that stretch reads AFLTGVYGMWNIYIFALLILY. Topologically, residues 504–562 are cytoplasmic; it reads APSHKQWPTMHHSDETTQSNENIVASAASEEIEFSHLPSDSNPSEISSLTSFTRKVAFD. Residues 539–562 are disordered; the sequence is HLPSDSNPSEISSLTSFTRKVAFD. Over residues 541-556 the composition is skewed to polar residues; the sequence is PSDSNPSEISSLTSFT.

Belongs to the wntless family. As to quaternary structure, interacts with wg; in the Golgi. Interacts with Vps35, a component of the retromer complex; wls stability is regulated by Vps35.

The protein localises to the presynaptic cell membrane. It is found in the postsynaptic cell membrane. Its subcellular location is the cell membrane. The protein resides in the endoplasmic reticulum membrane. It localises to the endosome membrane. The protein localises to the golgi apparatus membrane. Functionally, a segment polarity gene required for wingless (wg)-dependent patterning processes, acting in both wg-sending cells and wg-target cells. In non-neuronal cells wls directs wg secretion. The wls traffic loop encompasses the Golgi, the cell surface, an endocytic compartment and a retrograde route leading back to the Golgi, and involves clathrin-mediated endocytosis and the retromer complex (a conserved protein complex consisting of Vps35 and Vps26). In neuronal cells (the larval motorneuron NMJ), the wg signal moves across the synapse via the release of wls-containing exosome-like vesicles. Postsynaptic wls is required for the trafficking of fz2 through the fz2-interacting protein Grip. The polypeptide is Protein wntless (Drosophila erecta (Fruit fly)).